A 173-amino-acid polypeptide reads, in one-letter code: Ribulose bisphosphate carboxylase small subunit, chloroplastic 5 (173 aa).

The transit peptide at 1-49 (MASIPATVATVAQANMVAPFTGLKSNAAFPVTKKVNDFSTLPSNGGRVQ) directs the protein to the chloroplast.

The protein belongs to the RuBisCO small chain family. Heterohexadecamer of 8 large and 8 small subunits.

Its subcellular location is the plastid. The protein resides in the chloroplast. Functionally, ruBisCO catalyzes two reactions: the carboxylation of D-ribulose 1,5-bisphosphate, the primary event in carbon dioxide fixation, as well as the oxidative fragmentation of the pentose substrate. Both reactions occur simultaneously and in competition at the same active site. Although the small subunit is not catalytic it is essential for maximal activity. This chain is Ribulose bisphosphate carboxylase small subunit, chloroplastic 5, found in Flaveria pringlei.